The primary structure comprises 430 residues: Serine hydroxymethyltransferase 1 (430 aa).

(6S)-5,6,7,8-tetrahydrofolate contacts are provided by residues Leu132 and 136-138 (GHL). Lys241 is modified (N6-(pyridoxal phosphate)lysine).

This sequence belongs to the SHMT family. As to quaternary structure, homodimer. It depends on pyridoxal 5'-phosphate as a cofactor.

It is found in the cytoplasm. The catalysed reaction is (6R)-5,10-methylene-5,6,7,8-tetrahydrofolate + glycine + H2O = (6S)-5,6,7,8-tetrahydrofolate + L-serine. It participates in one-carbon metabolism; tetrahydrofolate interconversion. The protein operates within amino-acid biosynthesis; glycine biosynthesis; glycine from L-serine: step 1/1. Catalyzes the reversible interconversion of serine and glycine with tetrahydrofolate (THF) serving as the one-carbon carrier. This reaction serves as the major source of one-carbon groups required for the biosynthesis of purines, thymidylate, methionine, and other important biomolecules. Also exhibits THF-independent aldolase activity toward beta-hydroxyamino acids, producing glycine and aldehydes, via a retro-aldol mechanism. This is Serine hydroxymethyltransferase 1 from Bordetella parapertussis (strain 12822 / ATCC BAA-587 / NCTC 13253).